The following is a 156-amino-acid chain: Large ribosomal subunit protein bL9 (156 aa).

It belongs to the bacterial ribosomal protein bL9 family.

In terms of biological role, binds to the 23S rRNA. The sequence is that of Large ribosomal subunit protein bL9 from Treponema pallidum (strain Nichols).